Here is a 1041-residue protein sequence, read N- to C-terminus: MKTVAQIVAQNDWQNPVVFQRNRVGGHSPHHGYKTLEDALHNANAQKYLLNGEWDFCLFDAPEQVPESLLAATLSAEERAKWQSIVVPSNWQLKGYDKPIYCNVKYPFPVNPPIVPSENPTGCYRTTFSVTSAQLSQRNHIVFEGVNSAFHLWCNGEYVGYSQDSRLPAEFDISNLLVEGENRLAAMVIRWSDGSYLEDQDMWWLSGIFRDVSLITKPRQHIQDVFVTPTLDACYRDATVSVRTSIKAQLRCKVGIQLFDGDTTVTEQIVTGTNNKRVDEKGGWDDVVFQTLEVKEPKHWTAETPYLYRIVVSLIDDSGNVIDREAYNVGFRNVEMKNGQLLVNGKAVLIRGVNRHEHHQVKGHAINEDDMLEDIKLLKQNNFNAVRTAHYPNHPRWYELCDEYGLYVVDEANIETHGMFPMGRLSRDPLWAGAYMARFTQMVERDKNHPSIIIWSLGNECGHGPTHDAMYGWAKSFDPSRPVQYEGGGADTTATDIIAPMYARVDTDVEDDAVPKWAIKKWLSLPGENRPVILCEYAHAMGNSLGSFDEYWKAFKDYPRLQGGFIWDWVDQGLTKHTDSGDAFWAYGGDFGDTDNDRQFCINGLLFPDRTPHPHLFEAKYCQQHLSFSLTEETDKWQLSVKSDYLFRHTDNELLRWQVLENGKPIIEGECPIYVAPQQAQTVSIAPEINFKAGALYHLNIDVVLANDCAWAKAGHVIDTAQLALANKSGLIPFVSTANVANENAESGVTVKAENTTLLVSVKNNVFSFNSESGLLTSWLHEDSEMLSAPLEDNFFRAPLDNDIGVSEVDNPDPNAWESRWRRAGIGKWDRICTSVDVEQSTFDVRITSLFEYHYNDKLIAATKWVYTINHQAALTVEVEVLLDDSLPPMPRIGLQAAVPAPRSNEQERMRVTWQGLGPFENYPDRKAAARFGEHSLSIADLQTHYIFPTDNGLRSDCKQLNISGLRVNGQFCFSVSEYGQVQLDTAKHTSDLMPQDCVFVYIDHAHMGVGGDDSWSPSTHKAFLIEEKCYRYSVTFCAKV.

Positions 103 and 201 each coordinate substrate. Asp201 is a binding site for Na(+). The Mg(2+) site is built by Glu415, His417, and Glu460. Residues Glu460 and 536 to 539 each bind substrate; that span reads EYAH. The active-site Proton donor is Glu460. The active-site Nucleophile is the Glu536. A Mg(2+)-binding site is contributed by Asn596. Na(+) is bound by residues Phe600 and Asn603. Substrate is bound by residues Asn603 and Trp1016.

It belongs to the glycosyl hydrolase 2 family. In terms of assembly, homotetramer. The cofactor is Mg(2+). Na(+) serves as cofactor.

It carries out the reaction Hydrolysis of terminal non-reducing beta-D-galactose residues in beta-D-galactosides.. The polypeptide is Beta-galactosidase (Alteromonas mediterranea (strain DSM 17117 / CIP 110805 / LMG 28347 / Deep ecotype)).